The sequence spans 321 residues: 4-hydroxy-3-methylbut-2-enyl diphosphate reductase (321 aa).

Cys12 is a [4Fe-4S] cluster binding site. Residues His41 and His74 each coordinate (2E)-4-hydroxy-3-methylbut-2-enyl diphosphate. His41 and His74 together coordinate dimethylallyl diphosphate. The isopentenyl diphosphate site is built by His41 and His74. Residue Cys96 coordinates [4Fe-4S] cluster. His124 lines the (2E)-4-hydroxy-3-methylbut-2-enyl diphosphate pocket. Residue His124 participates in dimethylallyl diphosphate binding. Isopentenyl diphosphate is bound at residue His124. Glu126 functions as the Proton donor in the catalytic mechanism. Thr167 contributes to the (2E)-4-hydroxy-3-methylbut-2-enyl diphosphate binding site. Position 197 (Cys197) interacts with [4Fe-4S] cluster. 4 residues coordinate (2E)-4-hydroxy-3-methylbut-2-enyl diphosphate: Ser225, Ser226, Asn227, and Ser269. Ser225, Ser226, Asn227, and Ser269 together coordinate dimethylallyl diphosphate. Positions 225, 226, 227, and 269 each coordinate isopentenyl diphosphate.

Belongs to the IspH family. Homodimer. Requires [4Fe-4S] cluster as cofactor.

It carries out the reaction isopentenyl diphosphate + 2 oxidized [2Fe-2S]-[ferredoxin] + H2O = (2E)-4-hydroxy-3-methylbut-2-enyl diphosphate + 2 reduced [2Fe-2S]-[ferredoxin] + 2 H(+). The catalysed reaction is dimethylallyl diphosphate + 2 oxidized [2Fe-2S]-[ferredoxin] + H2O = (2E)-4-hydroxy-3-methylbut-2-enyl diphosphate + 2 reduced [2Fe-2S]-[ferredoxin] + 2 H(+). The protein operates within isoprenoid biosynthesis; dimethylallyl diphosphate biosynthesis; dimethylallyl diphosphate from (2E)-4-hydroxy-3-methylbutenyl diphosphate: step 1/1. It participates in isoprenoid biosynthesis; isopentenyl diphosphate biosynthesis via DXP pathway; isopentenyl diphosphate from 1-deoxy-D-xylulose 5-phosphate: step 6/6. Catalyzes the conversion of 1-hydroxy-2-methyl-2-(E)-butenyl 4-diphosphate (HMBPP) into a mixture of isopentenyl diphosphate (IPP) and dimethylallyl diphosphate (DMAPP). Acts in the terminal step of the DOXP/MEP pathway for isoprenoid precursor biosynthesis. The sequence is that of 4-hydroxy-3-methylbut-2-enyl diphosphate reductase from Escherichia coli O6:K15:H31 (strain 536 / UPEC).